The sequence spans 272 residues: Large ribosomal subunit protein uL4 (272 aa).

It belongs to the universal ribosomal protein uL4 family. Part of the 50S ribosomal subunit.

Its function is as follows. One of the primary rRNA binding proteins, this protein initially binds near the 5'-end of the 23S rRNA. It is important during the early stages of 50S assembly. It makes multiple contacts with different domains of the 23S rRNA in the assembled 50S subunit and ribosome. Functionally, forms part of the polypeptide exit tunnel. The polypeptide is Large ribosomal subunit protein uL4 (Aeropyrum pernix (strain ATCC 700893 / DSM 11879 / JCM 9820 / NBRC 100138 / K1)).